The primary structure comprises 1426 residues: DNA-directed RNA polymerase subunit beta' (1426 aa).

Zn(2+) contacts are provided by Cys71, Cys73, Cys86, and Cys89. Asp461, Asp463, and Asp465 together coordinate Mg(2+). Zn(2+)-binding residues include Cys814, Cys888, Cys895, and Cys898. The segment at 1392–1426 is disordered; the sequence is ADPIAAAESAIGLGGGEQPATSETGAGGSDPSEEG.

The protein belongs to the RNA polymerase beta' chain family. The RNAP catalytic core consists of 2 alpha, 1 beta, 1 beta' and 1 omega subunit. When a sigma factor is associated with the core the holoenzyme is formed, which can initiate transcription. Mg(2+) is required as a cofactor. Zn(2+) serves as cofactor.

It carries out the reaction RNA(n) + a ribonucleoside 5'-triphosphate = RNA(n+1) + diphosphate. DNA-dependent RNA polymerase catalyzes the transcription of DNA into RNA using the four ribonucleoside triphosphates as substrates. The chain is DNA-directed RNA polymerase subunit beta' from Alkalilimnicola ehrlichii (strain ATCC BAA-1101 / DSM 17681 / MLHE-1).